A 289-amino-acid polypeptide reads, in one-letter code: 4-hydroxybenzoate octaprenyltransferase (289 aa).

9 helical membrane passes run 19 to 39, 42 to 62, 85 to 105, 107 to 127, 134 to 154, 165 to 185, 211 to 231, 233 to 253, and 265 to 285; these read IPILLILWPTLTALVLASHGL, ISYLVIFTIGVVVMRTVGCII, GQLSIKNAIWLCISLTLVAFI, VLFLNLYTILLSFVALFLAIL, FFAIPQLILGLAFNFGIFMAF, AWIFYIATICWTIAYDTIYAL, ILLFNFLSLLLLIILGIYCDF, SFFYLGVVICSLFFVRNYFLY, and FSANHWIGLIIFIIAVIQYII.

The protein belongs to the UbiA prenyltransferase family. It depends on Mg(2+) as a cofactor.

The protein resides in the cell inner membrane. The enzyme catalyses all-trans-octaprenyl diphosphate + 4-hydroxybenzoate = 4-hydroxy-3-(all-trans-octaprenyl)benzoate + diphosphate. The protein operates within cofactor biosynthesis; ubiquinone biosynthesis. Functionally, catalyzes the prenylation of para-hydroxybenzoate (PHB) with an all-trans polyprenyl group. Mediates the second step in the final reaction sequence of ubiquinone-8 (UQ-8) biosynthesis, which is the condensation of the polyisoprenoid side chain with PHB, generating the first membrane-bound Q intermediate 3-octaprenyl-4-hydroxybenzoate. In Francisella tularensis subsp. holarctica (strain FTNF002-00 / FTA), this protein is 4-hydroxybenzoate octaprenyltransferase.